Consider the following 317-residue polypeptide: Melanocyte-stimulating hormone receptor (317 aa).

Over 1–37 (MAVQGSQRRLLGSLNSTPTAIPQLGLAANQTGARCLE) the chain is Extracellular. The N-linked (GlcNAc...) asparagine glycan is linked to Asn-29. Residues 38–63 (VSISDGLFLSLGLVSLVENALVVATI) traverse the membrane as a helical segment. Topologically, residues 64–72 (AKNRNLHSP) are cytoplasmic. Residues 73–93 (MYCFICCLALSDLLVSGSNVL) form a helical membrane-spanning segment. The Extracellular portion of the chain corresponds to 94-118 (ETAVILLLEAGALVARAAVLQQLDN). The chain crosses the membrane as a helical span at residues 119-140 (VIDVITCSSMLSSLCFLGAIAV). At 141–163 (DRYISIFYALRYHSIVTLPRARR) the chain is on the cytoplasmic side. A helical membrane pass occupies residues 164–183 (AVAAIWVASVVFSTLFIAYY). Over 184–191 (DHVAVLLC) the chain is Extracellular. A helical transmembrane segment spans residues 192–211 (LVVFFLAMLVLMAVLYVHML). Residues 212 to 240 (ARACQHAQGIARLHKRQRPVHQGFGLKGA) are Cytoplasmic-facing. A helical transmembrane segment spans residues 241–266 (VTLTILLGIFFLCWGPFFLHLTLIVL). Residues 267–279 (CPEHPTCGCIFKN) lie on the Extracellular side of the membrane. The helical transmembrane segment at 280 to 300 (FNLFLALIICNAIIDPLIYAF) threads the bilayer. Over 301–317 (HSQELRRTLKEVLTCSW) the chain is Cytoplasmic. Cys-315 carries the S-palmitoyl cysteine lipid modification.

Belongs to the G-protein coupled receptor 1 family. In terms of assembly, interacts with MGRN1, but does not undergo MGRN1-mediated ubiquitination; this interaction competes with GNAS-binding and thus inhibits agonist-induced cAMP production. Interacts with OPN3; the interaction results in a decrease in MC1R-mediated cAMP signaling and ultimately a decrease in melanin production in melanocytes. As to expression, expressed in melanocytes. Expressed in corticoadrenal tissue.

The protein resides in the cell membrane. Its function is as follows. Receptor for MSH (alpha, beta and gamma) and ACTH. The activity of this receptor is mediated by G proteins which activate adenylate cyclase. Mediates melanogenesis, the production of eumelanin (black/brown) and phaeomelanin (red/yellow), via regulation of cAMP signaling in melanocytes. The sequence is that of Melanocyte-stimulating hormone receptor (MC1R) from Homo sapiens (Human).